A 578-amino-acid polypeptide reads, in one-letter code: Trehalase (578 aa).

The signal sequence occupies residues 1–19 (MPGSTWELHLLLLLGLGLG). Residue Asn-78 is glycosylated (N-linked (GlcNAc...) asparagine). Substrate contacts are provided by residues Arg-168, 175–176 (WD), Asn-212, and 221–223 (RSQ). An N-linked (GlcNAc...) asparagine glycan is attached at Asn-261. Substrate is bound by residues 286–288 (RPE) and Gly-319. Asp-321 serves as the catalytic Proton donor/acceptor. N-linked (GlcNAc...) asparagine glycosylation occurs at Asn-369. Glu-514 functions as the Proton donor/acceptor in the catalytic mechanism. A substrate-binding site is contributed by Glu-528. The GPI-anchor amidated serine moiety is linked to residue Ser-555. A propeptide spans 556 to 578 (GTQLALLEPHCLAAALLLSFLTR) (removed in mature form).

This sequence belongs to the glycosyl hydrolase 37 family. In terms of assembly, homodimer; disulfide-linked. Expressed in small intestine, kidney, and to a lesser extent in liver.

It localises to the cell membrane. The catalysed reaction is alpha,alpha-trehalose + H2O = alpha-D-glucose + beta-D-glucose. Its function is as follows. Intestinal trehalase is probably involved in the hydrolysis of ingested trehalose. In Oryctolagus cuniculus (Rabbit), this protein is Trehalase (TREH).